The following is a 322-amino-acid chain: MKRIGIMTSGGDAPGMNLAIRAVARKALSSGLEAYGINYGFAGLVAGDIHEFKAADLDDMVSQGGTMLYSARYPEFAQEESQLKGIEQLKKFGIDALVVIGGDGSYHGALRLTEHGYNTIGLPGTIDNDIPFTDFTIGFDTALNTAVDAIDKIRDTAKSHQRVFAVQVMGRNAADIALWAGVASGADAVIAPGFDYDVEAIANKLKKNRANGKDYGIIVIAEGDANSDAAPEFIDQLKQYGDFDARATVIGHVQRGGVPSAKDRVLASKMGAYAVELLLEGKGGLAVGILENKVQAHNMLDLFDAKHQADDSLYQLSEDLSF.

Residue glycine 11 coordinates ATP. 21-25 (RAVAR) serves as a coordination point for ADP. Residues 72–73 (RY) and 102–105 (GDGS) each bind ATP. A Mg(2+)-binding site is contributed by aspartate 103. Residue 125–127 (TID) coordinates substrate. Aspartate 127 functions as the Proton acceptor in the catalytic mechanism. An ADP-binding site is contributed by arginine 154. Substrate-binding positions include arginine 162 and 169–171 (MGR). ADP is bound by residues 185 to 187 (GAD) and 213 to 215 (KDY). Substrate-binding positions include glutamate 222, arginine 246, and 252–255 (HVQR).

The protein belongs to the phosphofructokinase type A (PFKA) family. ATP-dependent PFK group I subfamily. Prokaryotic clade 'B1' sub-subfamily. As to quaternary structure, homotetramer. Mg(2+) is required as a cofactor.

The protein resides in the cytoplasm. The enzyme catalyses beta-D-fructose 6-phosphate + ATP = beta-D-fructose 1,6-bisphosphate + ADP + H(+). The protein operates within carbohydrate degradation; glycolysis; D-glyceraldehyde 3-phosphate and glycerone phosphate from D-glucose: step 3/4. With respect to regulation, allosterically activated by ADP and other diphosphonucleosides, and allosterically inhibited by phosphoenolpyruvate. Functionally, catalyzes the phosphorylation of D-fructose 6-phosphate to fructose 1,6-bisphosphate by ATP, the first committing step of glycolysis. The chain is ATP-dependent 6-phosphofructokinase from Pediococcus pentosaceus (strain ATCC 25745 / CCUG 21536 / LMG 10740 / 183-1w).